The sequence spans 456 residues: N(6)-adenosine-methyltransferase non-catalytic subunit METTL14 (456 aa).

Basic and acidic residues predominate over residues 39-51; the sequence is DEQREIAETRETS. The interval 39-74 is disordered; sequence DEQREIAETRETSRASYDTSATVSKRKMPEEGEADE. The segment covering 52 to 61 has biased composition (polar residues); that stretch reads RASYDTSATV. Interaction with METTL3 stretches follow at residues 135–136 and 237–238; these read RD and SG. The segment at 245–254 is positively charged region required for RNA-binding; it reads RMCLRKWGFR. Interaction with METTL3 regions lie at residues 255–258 and 278–287; these read RSED and KAIFQRTKEH. A positively charged region required for RNA-binding region spans residues 297-298; it reads HR. The segment at 308-312 is interaction with METTL3; the sequence is NVDID. Residues 395–456 form a disordered region; sequence LRPKTPPPKS…GPHRGVFAPR (62 aa). The span at 410 to 421 shows a compositional bias: gly residues; it reads ASRGGGRGGPSA. A compositionally biased stretch (basic and acidic residues) spans 423–441; that stretch reads RGERGRERNRGSFRGDRGN.

The protein belongs to the MT-A70-like family. In terms of assembly, heterodimer; heterodimerizes with mettl3 to form an antiparallel heterodimer that constitutes an active methyltransferase. Component of the WMM complex, a N6-methyltransferase complex composed of a catalytic subcomplex, named MAC, and of an associated subcomplex, named MACOM. The MAC subcomplex is composed of mettl3 and mettl14.

It is found in the nucleus. In terms of biological role, the METTL3-METTL14 heterodimer forms a N6-methyltransferase complex that methylates adenosine residues at the N(6) position of some mRNAs and regulates the circadian clock, differentiation of embryonic stem cells and cortical neurogenesis. In the heterodimer formed with mettl3, mettl14 constitutes the RNA-binding scaffold that recognizes the substrate rather than the catalytic core. N6-methyladenosine (m6A), which takes place at the 5'-[AG]GAC-3' consensus sites of some mRNAs, plays a role in mRNA stability and processing. The sequence is that of N(6)-adenosine-methyltransferase non-catalytic subunit METTL14 (mettl14) from Xenopus tropicalis (Western clawed frog).